Reading from the N-terminus, the 394-residue chain is MLKQIQKFLKLEAASGILLLVSALLAMIFANTDLNQLYFSFLQTEVAIKFGAFSIDKPLLMWVNDGFMAVFFILVGMEVKRELFEGSLSSYQKAIFPAVAALGGMIIPALVYWFINQNSPEYQQGWAIPMATDIAFALGIVALLSKQVPPALKVFLLALAIIDDLGAIIVIALFFSHEMSMQALTIASIAIVILVAMNRYKVTGLINYAIIGTILWASVLKSGVHATLAGVVIGFCIPLRGKNGEAPLHHLEHALAPWCSFAILPLFAFSNAGVSLEGMSLDKLASPLPLGVALGLIIGKPVGVFLFSYVAVLLGIAKVPEGINLKQIFAIAVLCGIGFTMSMFIAGLAFGEEDASESVLALARLGILMGTFVAAIIGYFLLKITTKPSLMKAA.

Transmembrane regions (helical) follow at residues 11–31 (LEAASGILLLVSALLAMIFAN), 59–79 (LLMWVNDGFMAVFFILVGMEV), 95–115 (IFPAVAALGGMIIPALVYWFI), 125–145 (GWAIPMATDIAFALGIVALLS), 155–175 (FLLALAIIDDLGAIIVIALFF), 177–197 (HEMSMQALTIASIAIVILVAM), 203–220 (TGLINYAIIGTILWASVL), 254–274 (ALAPWCSFAILPLFAFSNAGV), 296–316 (LIIGKPVGVFLFSYVAVLLGI), 328–348 (IFAIAVLCGIGFTMSMFIAGL), and 365–385 (LGILMGTFVAAIIGYFLLKIT).

Belongs to the NhaA Na(+)/H(+) (TC 2.A.33) antiporter family.

The protein resides in the cell inner membrane. It catalyses the reaction Na(+)(in) + 2 H(+)(out) = Na(+)(out) + 2 H(+)(in). In terms of biological role, na(+)/H(+) antiporter that extrudes sodium in exchange for external protons. The polypeptide is Na(+)/H(+) antiporter NhaA (Actinobacillus pleuropneumoniae serotype 7 (strain AP76)).